A 139-amino-acid polypeptide reads, in one-letter code: Small ribosomal subunit protein bS16 (139 aa).

Residues Lys-84 to Ala-139 form a disordered region.

This sequence belongs to the bacterial ribosomal protein bS16 family.

The polypeptide is Small ribosomal subunit protein bS16 (Streptomyces lividans).